A 157-amino-acid chain; its full sequence is SsrA-binding protein (157 aa).

A disordered region spans residues 128 to 157 (LARGKKQHDKRAAEKERDWEREKQRVMRRG). Positions 137–157 (KRAAEKERDWEREKQRVMRRG) are enriched in basic and acidic residues.

This sequence belongs to the SmpB family.

Its subcellular location is the cytoplasm. Its function is as follows. Required for rescue of stalled ribosomes mediated by trans-translation. Binds to transfer-messenger RNA (tmRNA), required for stable association of tmRNA with ribosomes. tmRNA and SmpB together mimic tRNA shape, replacing the anticodon stem-loop with SmpB. tmRNA is encoded by the ssrA gene; the 2 termini fold to resemble tRNA(Ala) and it encodes a 'tag peptide', a short internal open reading frame. During trans-translation Ala-aminoacylated tmRNA acts like a tRNA, entering the A-site of stalled ribosomes, displacing the stalled mRNA. The ribosome then switches to translate the ORF on the tmRNA; the nascent peptide is terminated with the 'tag peptide' encoded by the tmRNA and targeted for degradation. The ribosome is freed to recommence translation, which seems to be the essential function of trans-translation. The protein is SsrA-binding protein of Methylococcus capsulatus (strain ATCC 33009 / NCIMB 11132 / Bath).